Reading from the N-terminus, the 251-residue chain is Hydroxyacylglutathione hydrolase (251 aa).

7 residues coordinate Zn(2+): His53, His55, Asp57, His58, His110, Asp127, and His165.

It belongs to the metallo-beta-lactamase superfamily. Glyoxalase II family. As to quaternary structure, monomer. Zn(2+) is required as a cofactor.

It catalyses the reaction an S-(2-hydroxyacyl)glutathione + H2O = a 2-hydroxy carboxylate + glutathione + H(+). The protein operates within secondary metabolite metabolism; methylglyoxal degradation; (R)-lactate from methylglyoxal: step 2/2. Thiolesterase that catalyzes the hydrolysis of S-D-lactoyl-glutathione to form glutathione and D-lactic acid. This is Hydroxyacylglutathione hydrolase from Escherichia coli (strain SMS-3-5 / SECEC).